We begin with the raw amino-acid sequence, 208 residues long: Coiled-coil domain-containing protein 25 (208 aa).

Residues 1–105 lie on the Extracellular side of the membrane; it reads MVFYFTSSSV…SNLKKTADMD (105 aa). The DNA-binding stretch occupies residues 21–25; that stretch reads KDKYE. Lys23 bears the N6-acetyllysine mark. Residues 106-122 form a helical membrane-spanning segment; sequence VGQIGFHRQKDVKIVTV. The stretch at 117–187 forms a coiled coil; that stretch reads VKIVTVEKKV…REMDELRSYS (71 aa). Topologically, residues 123 to 208 are cytoplasmic; the sequence is EKKVNEILNR…QDGNDSDEFM (86 aa). Basic and acidic residues predominate over residues 144–184; the sequence is LAAEKEGRDREERNEKKAQIQEMKRKEKEEMKKKREMDELR. The interval 144 to 208 is disordered; it reads LAAEKEGRDR…QDGNDSDEFM (65 aa). A Phosphoserine modification is found at Ser204.

This sequence belongs to the CCDC25 family. In terms of assembly, interacts (via cytoplasmic region) with ILK.

It localises to the cell membrane. The protein localises to the endomembrane system. In terms of biological role, transmembrane receptor that senses neutrophil extracellular traps (NETs) and triggers the ILK-PARVB pathway to enhance cell motility. NETs are mainly composed of DNA fibers and are released by neutrophils to bind pathogens during inflammation. Formation of NETs is also associated with cancer metastasis, NET-DNA acting as a chemotactic factor to attract cancer cells. Specifically binds NETs on its extracellular region, in particular the 8-OHdG-enriched DNA present in NETs, and recruits ILK, initiating the ILK-PARVB cascade to induce cytoskeleton rearrangement and directional migration of cells. In the context of cancer, promotes cancer metastasis by sensing NETs and promoting migration of tumor cells. In Mus musculus (Mouse), this protein is Coiled-coil domain-containing protein 25.